A 90-amino-acid polypeptide reads, in one-letter code: Cell division topological specificity factor (90 aa).

It belongs to the MinE family.

Prevents the cell division inhibition by proteins MinC and MinD at internal division sites while permitting inhibition at polar sites. This ensures cell division at the proper site by restricting the formation of a division septum at the midpoint of the long axis of the cell. This Lachnoclostridium phytofermentans (strain ATCC 700394 / DSM 18823 / ISDg) (Clostridium phytofermentans) protein is Cell division topological specificity factor.